A 268-amino-acid polypeptide reads, in one-letter code: 14-3-3-like protein GF14 upsilon (268 aa).

Phosphoserine occurs at positions 69 and 192. At Thr213 the chain carries Phosphothreonine. The interval 243-268 (EAGDDIKEAPKEVQKVDEQAQPPPSQ) is disordered. The span at 246–260 (DDIKEAPKEVQKVDE) shows a compositional bias: basic and acidic residues. At Ser267 the chain carries Phosphoserine.

It belongs to the 14-3-3 family. As to quaternary structure, interacts with EDE1. Interacts with DREB1A and DREB1B in the nucleus. Interacts with CINV1.

The protein localises to the cytoplasm. Its subcellular location is the nucleus. Is associated with a DNA binding complex that binds to the G box, a well-characterized cis-acting DNA regulatory element found in plant genes. May be involved in cell cycle regulation by binding to soluble EDE1 and sequestering it in an inactive form during the early stages of mitosis. This is 14-3-3-like protein GF14 upsilon (GRF5) from Arabidopsis thaliana (Mouse-ear cress).